The chain runs to 228 residues: Biosynthetic peptidoglycan transglycosylase (228 aa).

The helical transmembrane segment at 8-28 (GVAALLALFLLYQLWIFGHIV) threads the bilayer.

The protein belongs to the glycosyltransferase 51 family.

It localises to the cell inner membrane. The enzyme catalyses [GlcNAc-(1-&gt;4)-Mur2Ac(oyl-L-Ala-gamma-D-Glu-L-Lys-D-Ala-D-Ala)](n)-di-trans,octa-cis-undecaprenyl diphosphate + beta-D-GlcNAc-(1-&gt;4)-Mur2Ac(oyl-L-Ala-gamma-D-Glu-L-Lys-D-Ala-D-Ala)-di-trans,octa-cis-undecaprenyl diphosphate = [GlcNAc-(1-&gt;4)-Mur2Ac(oyl-L-Ala-gamma-D-Glu-L-Lys-D-Ala-D-Ala)](n+1)-di-trans,octa-cis-undecaprenyl diphosphate + di-trans,octa-cis-undecaprenyl diphosphate + H(+). The protein operates within cell wall biogenesis; peptidoglycan biosynthesis. In terms of biological role, peptidoglycan polymerase that catalyzes glycan chain elongation from lipid-linked precursors. The chain is Biosynthetic peptidoglycan transglycosylase from Laribacter hongkongensis (strain HLHK9).